Consider the following 156-residue polypeptide: Snaclec A1 (156 aa).

An N-terminal signal peptide occupies residues 1-23 (MGRSISVSFGLLVVFLSLSGTGA). Intrachain disulfides connect C27-C38, C55-C154, and C129-C146. Residues 34-155 (HEGHCYKVFN…CGQPYRFTCE (122 aa)) form the C-type lectin domain.

It belongs to the snaclec family. Heterodimer; disulfide-linked. Expressed by the venom gland.

Its subcellular location is the secreted. Its function is as follows. Interferes with one step of hemostasis (modulation of platelet aggregation, or coagulation cascade, for example). This chain is Snaclec A1, found in Macrovipera lebetinus (Levantine viper).